An 862-amino-acid chain; its full sequence is MMASYTPMIQQYLKIKAEHQDAFLFFRLGDFYEMFFEDAKKASQELEITLTSRDGGSADKIPMCGVPYHSAAAYIEQLIKKGYKVAICEQTEDPKAAKGVVKREVVQLITPGTVMDGKGIHESENNFIASVSEFRDGYGLALSDLTTGENLAVFIERIEDVMSEIYSVSAKEIVVSSKFNEHTAAQLKERCGATISIEDGEITERIEIAKHLPGEELTETFMRLYTYLQKTQKRSLDHLQPVQVYELEEAMKIDLYSKRNLELTETIRSKSKKGSLLWLLDETKTAMGGRLLKQWIDRPLIRASQIEERQEMVETLINHLFEREDLRERLKEVYDLERLAGRVAFGNVNARDLIQLKESLKQVPSIKELVGSLNHKKAKERAGLIDPCGDLLDLLEEALHENPPLSLKEGNLIKDGYHQKLDEYRDASKNGKDWIARLEQQERAYTGIRSLKVGFNKVFGYYIEVTKANLHLLEDGRYERKQTLTNAERYITPELKEKEALILEAENNICELEYELFAVLREKVKQFIPRLQRLAKQMSELDALQCFATISENRHYTKPVFSDNEVKVIEGRHPVVEKVMDSQEYVPNNCLMGDSREMLLITGPNMSGKSTYMRQIALLSIMAQIGCFVPAKEAVLPIFDQIFTRIGAADDLISGQSTFMVEMLEAKNAIVNATKDSLILFDEIGRGTSTYDGMALAQAIIEYVHDHIGAKTLFSTHYHELTVLEDKLPQLKNVHVRAEEYNGTVVFLHQIKEGAADKSYGIHVAQLAELPDDLISRAQEILKQLEQTGDKPELPAVSEKKSAVREEPAQLSFFADGEKEQKAPAVSNKEKQVLEAFKSINILDMTPLEAMNEMYKLQKKLK.

ATP is bound at residue 603-610; sequence GPNMSGKS.

The protein belongs to the DNA mismatch repair MutS family.

Functionally, this protein is involved in the repair of mismatches in DNA. It is possible that it carries out the mismatch recognition step. This protein has a weak ATPase activity. This Bacillus velezensis (strain DSM 23117 / BGSC 10A6 / LMG 26770 / FZB42) (Bacillus amyloliquefaciens subsp. plantarum) protein is DNA mismatch repair protein MutS.